Reading from the N-terminus, the 143-residue chain is MAKKIVGFVKLQVPAGKANPSPPIGPALGQRGLNIMEFCKAFNAQTQGIEPGLPLPVVITAFADKSFTFVIKSPPSSILIKKAVGVTKGSATPQSVKVGKITRAQLEEIAKTKMKDLTAADMDAAVRTIAGSARSMGVNVEGV.

Belongs to the universal ribosomal protein uL11 family. In terms of assembly, part of the ribosomal stalk of the 50S ribosomal subunit. Interacts with L10 and the large rRNA to form the base of the stalk. L10 forms an elongated spine to which L12 dimers bind in a sequential fashion forming a multimeric L10(L12)X complex. One or more lysine residues are methylated.

Functionally, forms part of the ribosomal stalk which helps the ribosome interact with GTP-bound translation factors. This Albidiferax ferrireducens (strain ATCC BAA-621 / DSM 15236 / T118) (Rhodoferax ferrireducens) protein is Large ribosomal subunit protein uL11.